Here is a 180-residue protein sequence, read N- to C-terminus: MFPMVTGFMNYGQQTVRAARYIGQSFMITLSHANRLPVTIQYPYEKSITSERFRGRIHFEFDKCIACEVCVRVCPIDLPVVHWRLETDIRKKRLLNYSIDFGICIFCGNCVEYCPTNCLSMTEEYELSAYNRHELNYNQIALGRLPMSVIEDYTIRTTRNSTQIKIAMDKPLNARTVTNF.

2 consecutive 4Fe-4S ferredoxin-type domains span residues 55–84 and 95–124; these read GRIHFEFDKCIACEVCVRVCPIDLPVVHWR and LNYSIDFGICIFCGNCVEYCPTNCLSMTEE. Positions 64, 67, 70, 74, 104, 107, 110, and 114 each coordinate [4Fe-4S] cluster.

The protein belongs to the complex I 23 kDa subunit family. As to quaternary structure, NDH is composed of at least 16 different subunits, 5 of which are encoded in the nucleus. It depends on [4Fe-4S] cluster as a cofactor.

It is found in the plastid. The protein resides in the chloroplast thylakoid membrane. It catalyses the reaction a plastoquinone + NADH + (n+1) H(+)(in) = a plastoquinol + NAD(+) + n H(+)(out). The catalysed reaction is a plastoquinone + NADPH + (n+1) H(+)(in) = a plastoquinol + NADP(+) + n H(+)(out). Functionally, NDH shuttles electrons from NAD(P)H:plastoquinone, via FMN and iron-sulfur (Fe-S) centers, to quinones in the photosynthetic chain and possibly in a chloroplast respiratory chain. The immediate electron acceptor for the enzyme in this species is believed to be plastoquinone. Couples the redox reaction to proton translocation, and thus conserves the redox energy in a proton gradient. This chain is NAD(P)H-quinone oxidoreductase subunit I, chloroplastic, found in Calycanthus floridus var. glaucus (Eastern sweetshrub).